A 99-amino-acid polypeptide reads, in one-letter code: SAGA-associated factor 11 (99 aa).

An SGF11-type zinc finger spans residues 71–92; that stretch reads IHCENCGRDVSANRLAAHLQRC.

Belongs to the SGF11 family. Component of the 1.8 MDa SAGA transcription coactivator-HAT complex. SAGA is built of 5 distinct domains with specialized functions. Within the SAGA complex, SUS1, SGF11, SGF73 and UBP8 form an additional subcomplex of SAGA called the DUB module (deubiquitination module). Interacts directly with SGF73, SUS1 and UBP8.

It is found in the nucleus. Its function is as follows. Functions as a component of the transcription regulatory histone acetylation (HAT) complex SAGA. At the promoters, SAGA is required for recruitment of the basal transcription machinery. It influences RNA polymerase II transcriptional activity through different activities such as TBP interaction and promoter selectivity, interaction with transcription activators, and chromatin modification through histone acetylation and deubiquitination. SAGA acetylates nucleosomal histone H3 to some extent (to form H3K9ac, H3K14ac, H3K18ac and H3K23ac). SAGA interacts with DNA via upstream activating sequences (UASs). Involved in transcriptional regulation of a subset of SAGA-regulated genes. Within the SAGA complex, participates in a subcomplex, that specifically deubiquitinates histones H2B. This Saccharomyces cerevisiae (strain RM11-1a) (Baker's yeast) protein is SAGA-associated factor 11.